Reading from the N-terminus, the 113-residue chain is Large ribosomal subunit protein uL22 (113 aa).

The protein belongs to the universal ribosomal protein uL22 family. In terms of assembly, part of the 50S ribosomal subunit.

In terms of biological role, this protein binds specifically to 23S rRNA; its binding is stimulated by other ribosomal proteins, e.g. L4, L17, and L20. It is important during the early stages of 50S assembly. It makes multiple contacts with different domains of the 23S rRNA in the assembled 50S subunit and ribosome. Functionally, the globular domain of the protein is located near the polypeptide exit tunnel on the outside of the subunit, while an extended beta-hairpin is found that lines the wall of the exit tunnel in the center of the 70S ribosome. This chain is Large ribosomal subunit protein uL22, found in Geobacillus sp. (strain WCH70).